The sequence spans 160 residues: Ribosome maturation factor RimP (160 aa).

The protein belongs to the RimP family.

The protein resides in the cytoplasm. In terms of biological role, required for maturation of 30S ribosomal subunits. In Cronobacter sakazakii (strain ATCC BAA-894) (Enterobacter sakazakii), this protein is Ribosome maturation factor RimP.